Here is a 158-residue protein sequence, read N- to C-terminus: Cyclic pyranopterin monophosphate synthase (158 aa).

Substrate contacts are provided by residues 73-75 (LCH) and 110-111 (ME). Asp125 is a catalytic residue.

Belongs to the MoaC family. In terms of assembly, homohexamer; trimer of dimers.

It carries out the reaction (8S)-3',8-cyclo-7,8-dihydroguanosine 5'-triphosphate = cyclic pyranopterin phosphate + diphosphate. The protein operates within cofactor biosynthesis; molybdopterin biosynthesis. Functionally, catalyzes the conversion of (8S)-3',8-cyclo-7,8-dihydroguanosine 5'-triphosphate to cyclic pyranopterin monophosphate (cPMP). This chain is Cyclic pyranopterin monophosphate synthase, found in Azotobacter vinelandii (strain DJ / ATCC BAA-1303).